The sequence spans 165 residues: Xanthine-guanine phosphoribosyltransferase (165 aa).

5-phospho-alpha-D-ribose 1-diphosphate is bound by residues 41–42 (RG) and 98–106 (DDLTDTGKT). Position 99 (Asp-99) interacts with Mg(2+). Asp-102 and Ile-145 together coordinate guanine. Residues Asp-102 and Ile-145 each coordinate xanthine. Residues 102 to 106 (DTGKT) and 144 to 145 (WI) contribute to the GMP site.

This sequence belongs to the purine/pyrimidine phosphoribosyltransferase family. XGPT subfamily. As to quaternary structure, homotetramer. The cofactor is Mg(2+).

The protein resides in the cell inner membrane. It carries out the reaction GMP + diphosphate = guanine + 5-phospho-alpha-D-ribose 1-diphosphate. It catalyses the reaction XMP + diphosphate = xanthine + 5-phospho-alpha-D-ribose 1-diphosphate. The enzyme catalyses IMP + diphosphate = hypoxanthine + 5-phospho-alpha-D-ribose 1-diphosphate. The protein operates within purine metabolism; GMP biosynthesis via salvage pathway; GMP from guanine: step 1/1. Its pathway is purine metabolism; XMP biosynthesis via salvage pathway; XMP from xanthine: step 1/1. Purine salvage pathway enzyme that catalyzes the transfer of the ribosyl-5-phosphate group from 5-phospho-alpha-D-ribose 1-diphosphate (PRPP) to the N9 position of the 6-oxopurines guanine and xanthine to form the corresponding ribonucleotides GMP (guanosine 5'-monophosphate) and XMP (xanthosine 5'-monophosphate), with the release of PPi. To a lesser extent, also acts on hypoxanthine. The sequence is that of Xanthine-guanine phosphoribosyltransferase from Brucella canis (strain ATCC 23365 / NCTC 10854 / RM-666).